The primary structure comprises 61 residues: Small ribosomal subunit protein bS21 (61 aa).

Belongs to the bacterial ribosomal protein bS21 family.

This Methylacidiphilum infernorum (isolate V4) (Methylokorus infernorum (strain V4)) protein is Small ribosomal subunit protein bS21.